The sequence spans 484 residues: uncharacterized protein (484 aa).

Transmembrane regions (helical) follow at residues 19–39 (LSFG…MIFV), 78–98 (VNWG…WLIV), 110–130 (LFFM…GFII), 134–154 (IFAI…SNYL), 165–185 (FSPF…AGII), 199–219 (IVFL…IILG), 249–269 (TWYW…PFTF), 289–309 (ISVF…TIGL), 321–341 (ISTI…VFVL), 360–380 (LFLF…GVML), 398–418 (FGLI…ITSL), and 440–460 (LGAY…LALL).

The protein localises to the cell membrane. This is an uncharacterized protein from Mesomycoplasma hyopneumoniae (strain J / ATCC 25934 / NCTC 10110) (Mycoplasma hyopneumoniae).